A 456-amino-acid polypeptide reads, in one-letter code: SWI/SNF complex component SNF12 homolog (456 aa).

An SWIB/MDM2 domain is found at 234-310; that stretch reads HVPQKYKVLG…PQLLREHLSP (77 aa). The interval 435 to 456 is disordered; it reads KQTTPNPTPQQISMAPSTPQTP.

Belongs to the SMARCD family. As to quaternary structure, part of a SWI-SNF complex.

It localises to the nucleus. In terms of biological role, involved in transcriptional activation and repression of select genes by chromatin remodeling (alteration of DNA-nucleosome topology). This chain is SWI/SNF complex component SNF12 homolog (snf12-1), found in Dictyostelium discoideum (Social amoeba).